Reading from the N-terminus, the 457-residue chain is MVQINEVKDTQTRESRTAAHTHIKGLGLDEHGIAKRVEGGFVGQSDAREACGIIVDLIKSKRMSGKAILLAGAPGTGKTALALAISQELGPKVPFCPIVGSELFSAEIKKTAALMENFRRAIGLRIKETKEVYEGEVIELTPEEAENPLGGYGKTISHVIVGLKTAKGTKSLRLDPSIYESIQKERVSVGDVIYIEANTGSVKRVGRSDAYATEFDLEAEEYVPLPKGEVHKKKEIVQDVTLHDLDVANARPQGGQDVLSMMGQLLKPRKTEITDKLRSEVNKVVSKYIDQGVAELIPGVLFIDEVNMLDIECFTYLNRALESSIAPIVVLASNRGMTTIRGTDDDKKSPHGCPADLIDRLLIVRTLPYNQEEIKIIISKRATLENLIVTPDALDKLSLHGINNSLRYALQLLAPAGVLSKTAGRNEITSEDIEECEILFLDSRRSIKILEETKGYL.

72–79 (GAPGTGKT) contributes to the ATP binding site.

The protein belongs to the RuvB family. May form heterododecamers with RVB2. Component of the SWR1 chromatin remodeling complex, the INO80 chromatin remodeling complex, and of the R2TP complex.

It localises to the nucleus. It catalyses the reaction ATP + H2O = ADP + phosphate + H(+). Its function is as follows. DNA helicase which participates in several chromatin remodeling complexes, including the SWR1 and the INO80 complexes. The SWR1 complex mediates the ATP-dependent exchange of histone H2A for the H2A variant HZT1 leading to transcriptional regulation of selected genes by chromatin remodeling. The INO80 complex remodels chromatin by shifting nucleosomes and is involved in DNA repair. Also involved in pre-rRNA processing. This chain is RuvB-like helicase 1 (RBV1), found in Debaryomyces hansenii (strain ATCC 36239 / CBS 767 / BCRC 21394 / JCM 1990 / NBRC 0083 / IGC 2968) (Yeast).